We begin with the raw amino-acid sequence, 264 residues long: Undecaprenyl-diphosphatase (264 aa).

Helical transmembrane passes span 1–21, 40–60, 81–101, 109–129, 140–160, 183–203, 211–231, and 239–259; these read MTVF…FLPI, GLTF…AFFW, MFWY…LLEE, TPLL…WADA, ISMA…IPGV, FSFL…LKDI, AFIT…SFLL, and FALF…LAAA.

It belongs to the UppP family.

The protein localises to the cell membrane. It catalyses the reaction di-trans,octa-cis-undecaprenyl diphosphate + H2O = di-trans,octa-cis-undecaprenyl phosphate + phosphate + H(+). Catalyzes the dephosphorylation of undecaprenyl diphosphate (UPP). Confers resistance to bacitracin. This chain is Undecaprenyl-diphosphatase, found in Pelotomaculum thermopropionicum (strain DSM 13744 / JCM 10971 / SI).